We begin with the raw amino-acid sequence, 581 residues long: Arginine--tRNA ligase (581 aa).

Positions 126-136 (PNLAKEMHVGH) match the 'HIGH' region motif.

The protein belongs to the class-I aminoacyl-tRNA synthetase family. In terms of assembly, monomer.

Its subcellular location is the cytoplasm. The enzyme catalyses tRNA(Arg) + L-arginine + ATP = L-arginyl-tRNA(Arg) + AMP + diphosphate. In Shewanella baltica (strain OS223), this protein is Arginine--tRNA ligase.